Here is a 318-residue protein sequence, read N- to C-terminus: Aspartate carbamoyltransferase catalytic subunit (318 aa).

Carbamoyl phosphate-binding residues include Arg-59 and Thr-60. Lys-87 contacts L-aspartate. Positions 109, 137, and 140 each coordinate carbamoyl phosphate. L-aspartate-binding residues include Arg-170 and Arg-224. The carbamoyl phosphate site is built by Gly-265 and Pro-266.

The protein belongs to the aspartate/ornithine carbamoyltransferase superfamily. ATCase family. As to quaternary structure, heterododecamer (2C3:3R2) of six catalytic PyrB chains organized as two trimers (C3), and six regulatory PyrI chains organized as three dimers (R2).

The catalysed reaction is carbamoyl phosphate + L-aspartate = N-carbamoyl-L-aspartate + phosphate + H(+). It functions in the pathway pyrimidine metabolism; UMP biosynthesis via de novo pathway; (S)-dihydroorotate from bicarbonate: step 2/3. Functionally, catalyzes the condensation of carbamoyl phosphate and aspartate to form carbamoyl aspartate and inorganic phosphate, the committed step in the de novo pyrimidine nucleotide biosynthesis pathway. This chain is Aspartate carbamoyltransferase catalytic subunit, found in Allorhizobium ampelinum (strain ATCC BAA-846 / DSM 112012 / S4) (Agrobacterium vitis (strain S4)).